A 289-amino-acid polypeptide reads, in one-letter code: Putative 2-aminoethylphosphonate transport system permease protein PhnU (289 aa).

6 consecutive transmembrane segments (helical) span residues 19–39 (WLLL…SLIV), 76–96 (FFAT…LVFI), 111–131 (FIAL…GSAG), 150–170 (FLYS…PLVM), 202–222 (VIFP…LLLT), and 254–274 (YTVA…LFSL). The ABC transmembrane type-1 domain maps to 68 to 275 (LLNTLQIAFF…VLSLGLFSLY (208 aa)).

The protein belongs to the binding-protein-dependent transport system permease family.

It localises to the cell inner membrane. Its function is as follows. Probably part of the PhnSTUV complex (TC 3.A.1.11.5) involved in 2-aminoethylphosphonate import. Probably responsible for the translocation of the substrate across the membrane. The polypeptide is Putative 2-aminoethylphosphonate transport system permease protein PhnU (phnU) (Salmonella paratyphi A (strain ATCC 9150 / SARB42)).